A 150-amino-acid chain; its full sequence is Ribosomal RNA large subunit methyltransferase H (150 aa).

Residues Ala100 and 118–123 contribute to the S-adenosyl-L-methionine site; that span reads LSEMTF.

Belongs to the RNA methyltransferase RlmH family. In terms of assembly, homodimer.

Its subcellular location is the cytoplasm. The catalysed reaction is pseudouridine(1915) in 23S rRNA + S-adenosyl-L-methionine = N(3)-methylpseudouridine(1915) in 23S rRNA + S-adenosyl-L-homocysteine + H(+). Its function is as follows. Specifically methylates the pseudouridine at position 1915 (m3Psi1915) in 23S rRNA. The sequence is that of Ribosomal RNA large subunit methyltransferase H from Helicobacter pylori (strain Shi470).